The sequence spans 362 residues: UDP-N-acetylglucosamine--N-acetylmuramyl-(pentapeptide) pyrophosphoryl-undecaprenol N-acetylglucosamine transferase (362 aa).

UDP-N-acetyl-alpha-D-glucosamine-binding positions include 15-17, asparagine 127, arginine 165, serine 191, isoleucine 247, 266-271, and glutamine 292; these read TGG and ALTVSE.

The protein belongs to the glycosyltransferase 28 family. MurG subfamily.

The protein resides in the cell inner membrane. It carries out the reaction di-trans,octa-cis-undecaprenyl diphospho-N-acetyl-alpha-D-muramoyl-L-alanyl-D-glutamyl-meso-2,6-diaminopimeloyl-D-alanyl-D-alanine + UDP-N-acetyl-alpha-D-glucosamine = di-trans,octa-cis-undecaprenyl diphospho-[N-acetyl-alpha-D-glucosaminyl-(1-&gt;4)]-N-acetyl-alpha-D-muramoyl-L-alanyl-D-glutamyl-meso-2,6-diaminopimeloyl-D-alanyl-D-alanine + UDP + H(+). It participates in cell wall biogenesis; peptidoglycan biosynthesis. In terms of biological role, cell wall formation. Catalyzes the transfer of a GlcNAc subunit on undecaprenyl-pyrophosphoryl-MurNAc-pentapeptide (lipid intermediate I) to form undecaprenyl-pyrophosphoryl-MurNAc-(pentapeptide)GlcNAc (lipid intermediate II). In Shewanella oneidensis (strain ATCC 700550 / JCM 31522 / CIP 106686 / LMG 19005 / NCIMB 14063 / MR-1), this protein is UDP-N-acetylglucosamine--N-acetylmuramyl-(pentapeptide) pyrophosphoryl-undecaprenol N-acetylglucosamine transferase.